Reading from the N-terminus, the 205-residue chain is Ribosomal RNA large subunit methyltransferase E (205 aa).

5 residues coordinate S-adenosyl-L-methionine: glycine 60, tryptophan 62, aspartate 80, aspartate 96, and aspartate 121. Lysine 161 (proton acceptor) is an active-site residue.

It belongs to the class I-like SAM-binding methyltransferase superfamily. RNA methyltransferase RlmE family.

Its subcellular location is the cytoplasm. It carries out the reaction uridine(2552) in 23S rRNA + S-adenosyl-L-methionine = 2'-O-methyluridine(2552) in 23S rRNA + S-adenosyl-L-homocysteine + H(+). Specifically methylates the uridine in position 2552 of 23S rRNA at the 2'-O position of the ribose in the fully assembled 50S ribosomal subunit. This is Ribosomal RNA large subunit methyltransferase E from Azoarcus sp. (strain BH72).